The sequence spans 258 residues: uncharacterized protein (258 aa).

This is an uncharacterized protein from Mycobacterium tuberculosis (strain CDC 1551 / Oshkosh).